Consider the following 203-residue polypeptide: dITP/XTP pyrophosphatase (203 aa).

Residue 8–13 (TANKGK) participates in substrate binding. Mg(2+)-binding residues include Glu41 and Asp70. Asp70 functions as the Proton acceptor in the catalytic mechanism. Substrate is bound by residues Ser71, 153–156 (FGYD), Lys176, and 181–182 (HR).

The protein belongs to the HAM1 NTPase family. In terms of assembly, homodimer. It depends on Mg(2+) as a cofactor.

It carries out the reaction XTP + H2O = XMP + diphosphate + H(+). The catalysed reaction is dITP + H2O = dIMP + diphosphate + H(+). It catalyses the reaction ITP + H2O = IMP + diphosphate + H(+). Its function is as follows. Pyrophosphatase that catalyzes the hydrolysis of nucleoside triphosphates to their monophosphate derivatives, with a high preference for the non-canonical purine nucleotides XTP (xanthosine triphosphate), dITP (deoxyinosine triphosphate) and ITP. Seems to function as a house-cleaning enzyme that removes non-canonical purine nucleotides from the nucleotide pool, thus preventing their incorporation into DNA/RNA and avoiding chromosomal lesions. This chain is dITP/XTP pyrophosphatase, found in Listeria monocytogenes serotype 4b (strain F2365).